The chain runs to 102 residues: Trp operon repressor homolog (102 aa).

Residues Gln59–Leu82 mediate DNA binding.

The protein belongs to the TrpR family. As to quaternary structure, homodimer.

It localises to the cytoplasm. Its function is as follows. This protein is an aporepressor. When complexed with L-tryptophan it binds the operator region of the trp operon and prevents the initiation of transcription. The chain is Trp operon repressor homolog from Vibrio vulnificus (strain CMCP6).